A 502-amino-acid polypeptide reads, in one-letter code: 9-beta-pimara-7,15-diene oxidase (502 aa).

Transmembrane regions (helical) follow at residues 4 to 26 (INSE…ALLT) and 106 to 128 (LLVS…GAYW). Heme is bound at residue C438.

This sequence belongs to the cytochrome P450 family. Requires heme as cofactor.

It is found in the membrane. The catalysed reaction is 9beta-pimara-7,15-diene + 3 reduced [NADPH--hemoprotein reductase] + 3 O2 = 9beta-pimara-7,15-dien-19-oate + 3 oxidized [NADPH--hemoprotein reductase] + 4 H2O + 4 H(+). Functionally, involved in momilactone phytoalexins biosynthesis; acts as a multifunctional diterpene oxidase. Participates in the biosynthetic steps between 9-beta-pimara-7,15-diene and 3-beta-hydroxy-9-beta-pimara-7,15-dien-19,6-beta-olide. Also catalyzes consecutive oxidations at C19 of syn-stemod-13(17)-ene. The chain is 9-beta-pimara-7,15-diene oxidase (CYP99A3) from Oryza sativa subsp. japonica (Rice).